The primary structure comprises 197 residues: Orotate phosphoribosyltransferase (197 aa).

5-phospho-alpha-D-ribose 1-diphosphate-binding positions include R87, K91, H93, and 112-120; that span reads DDVATTGGS. Residues T116 and R144 each coordinate orotate.

Belongs to the purine/pyrimidine phosphoribosyltransferase family. PyrE subfamily. Homodimer. The cofactor is Mg(2+).

The enzyme catalyses orotidine 5'-phosphate + diphosphate = orotate + 5-phospho-alpha-D-ribose 1-diphosphate. The protein operates within pyrimidine metabolism; UMP biosynthesis via de novo pathway; UMP from orotate: step 1/2. Catalyzes the transfer of a ribosyl phosphate group from 5-phosphoribose 1-diphosphate to orotate, leading to the formation of orotidine monophosphate (OMP). The protein is Orotate phosphoribosyltransferase of Sulfolobus acidocaldarius (strain ATCC 33909 / DSM 639 / JCM 8929 / NBRC 15157 / NCIMB 11770).